The sequence spans 278 residues: Checkpoint protein HUS1B (278 aa).

It belongs to the HUS1 family. As to quaternary structure, interacts with RAD1 and RAD9B. As to expression, expressed strongly in testis, less in spleen, thymus, prostate, colon and leukocytes.

The chain is Checkpoint protein HUS1B (HUS1B) from Homo sapiens (Human).